The sequence spans 164 residues: Large ribosomal subunit protein bL9 (164 aa).

It belongs to the bacterial ribosomal protein bL9 family.

In terms of biological role, binds to the 23S rRNA. The polypeptide is Large ribosomal subunit protein bL9 (Psychrobacter sp. (strain PRwf-1)).